The chain runs to 135 residues: Putative large ribosomal subunit protein eL32' (135 aa).

The protein belongs to the eukaryotic ribosomal protein eL32 family.

The chain is Putative large ribosomal subunit protein eL32' (Rpl32-ps) from Mus musculus (Mouse).